The sequence spans 437 residues: MKNKIIASLKERISRQNWENWFLDFNIRELKDNHVVFEVGNFFIKERLEKKFNKIISKVVKDILGKDATYEITFKEIPYETKVESGPLIKKRPLLITPLNPKYTFENLVVGEFNKFAYNVFLEASKNPGFYNPIFLYSGVGLGKTHLAQALGNYLLETDPDMKVAYLTSEEFMNEMFSAIKNGNIDEFREKYRKKADILIIDDIQFLIGIKSAQTELFHTFNTIHEAGKQIIICSDRTPQELKDFHSRMISRFQMGLLVKIEKPSSEDLFKIGKKISEMKNVEIDDEIIKYISKIYDNPRLIHGAILRLIAYRNLYGTLNLSIAESILTNVSKPPKSFEEKLLEILSEIFDCSPDDITSSKRTKNISYARKIGMYFAVKKLNLSTRDVGTIFKKSHSSVVQNVKQVEKLLKEGNVILKNYLKQIDKMSKGFAQGESM.

The segment at 1–67 is domain I, interacts with DnaA modulators; the sequence is MKNKIIASLK…KVVKDILGKD (67 aa). Residues 67-97 form a domain II region; the sequence is DATYEITFKEIPYETKVESGPLIKKRPLLIT. The interval 98-313 is domain III, AAA+ region; that stretch reads PLNPKYTFEN…GAILRLIAYR (216 aa). ATP contacts are provided by Gly-141, Gly-143, Lys-144, and Thr-145. The segment at 314 to 437 is domain IV, binds dsDNA; sequence NLYGTLNLSI…SKGFAQGESM (124 aa).

This sequence belongs to the DnaA family. In terms of assembly, oligomerizes as a right-handed, spiral filament on DNA at oriC.

The protein resides in the cytoplasm. Its function is as follows. Plays an essential role in the initiation and regulation of chromosomal replication. ATP-DnaA binds to the origin of replication (oriC) to initiate formation of the DNA replication initiation complex once per cell cycle. Binds the DnaA box (a 9 base pair repeat at the origin) and separates the double-stranded (ds)DNA. Forms a right-handed helical filament on oriC DNA; dsDNA binds to the exterior of the filament while single-stranded (ss)DNA is stabiized in the filament's interior. The ATP-DnaA-oriC complex binds and stabilizes one strand of the AT-rich DNA unwinding element (DUE), permitting loading of DNA polymerase. After initiation quickly degrades to an ADP-DnaA complex that is not apt for DNA replication. Binds acidic phospholipids. The sequence is that of Chromosomal replication initiator protein DnaA from Thermosipho melanesiensis (strain DSM 12029 / CIP 104789 / BI429).